The sequence spans 360 residues: Peptide chain release factor 1 (360 aa).

Q237 carries the post-translational modification N5-methylglutamine.

The protein belongs to the prokaryotic/mitochondrial release factor family. In terms of processing, methylated by PrmC. Methylation increases the termination efficiency of RF1.

The protein localises to the cytoplasm. In terms of biological role, peptide chain release factor 1 directs the termination of translation in response to the peptide chain termination codons UAG and UAA. This is Peptide chain release factor 1 (prfA) from Pseudomonas aeruginosa (strain ATCC 15692 / DSM 22644 / CIP 104116 / JCM 14847 / LMG 12228 / 1C / PRS 101 / PAO1).